The following is a 311-amino-acid chain: p-hydroxybenzoic acid efflux pump subunit AaeA (311 aa).

The helical transmembrane segment at I11–F31 threads the bilayer.

The protein belongs to the membrane fusion protein (MFP) (TC 8.A.1) family.

It localises to the cell inner membrane. Forms an efflux pump with AaeB. This Serratia proteamaculans (strain 568) protein is p-hydroxybenzoic acid efflux pump subunit AaeA.